The primary structure comprises 301 residues: Transcriptional activator protein NhaR (301 aa).

The 58-residue stretch at 6–63 folds into the HTH lysR-type domain; it reads INYNHLYYFWHVYKEGSVVGAAEALYLTPQTITGQIRALEERLQGKLFKRKGRGLEPS. The segment at residues 23-42 is a DNA-binding region (H-T-H motif); sequence VVGAAEALYLTPQTITGQIR.

This sequence belongs to the LysR transcriptional regulatory family.

Its subcellular location is the cytoplasm. In terms of biological role, plays a role in the positive regulation of NhaA. The chain is Transcriptional activator protein NhaR (nhaR) from Escherichia coli (strain K12).